The following is a 248-amino-acid chain: Segregation and condensation protein A (248 aa).

Belongs to the ScpA family. As to quaternary structure, component of a cohesin-like complex composed of ScpA, ScpB and the Smc homodimer, in which ScpA and ScpB bind to the head domain of Smc. The presence of the three proteins is required for the association of the complex with DNA.

It localises to the cytoplasm. Functionally, participates in chromosomal partition during cell division. May act via the formation of a condensin-like complex containing Smc and ScpB that pull DNA away from mid-cell into both cell halves. The chain is Segregation and condensation protein A from Bacillus cytotoxicus (strain DSM 22905 / CIP 110041 / 391-98 / NVH 391-98).